Here is a 432-residue protein sequence, read N- to C-terminus: Phosphomethylpyrimidine synthase (432 aa).

Substrate is bound by residues N66, M95, Y124, H163, 185 to 187 (SRG), 226 to 229 (DGLR), and E265. H269 provides a ligand contact to Zn(2+). A substrate-binding site is contributed by Y292. H333 contacts Zn(2+). 3 residues coordinate [4Fe-4S] cluster: C409, C412, and C416.

It belongs to the ThiC family. The cofactor is [4Fe-4S] cluster.

It carries out the reaction 5-amino-1-(5-phospho-beta-D-ribosyl)imidazole + S-adenosyl-L-methionine = 4-amino-2-methyl-5-(phosphooxymethyl)pyrimidine + CO + 5'-deoxyadenosine + formate + L-methionine + 3 H(+). It functions in the pathway cofactor biosynthesis; thiamine diphosphate biosynthesis. In terms of biological role, catalyzes the synthesis of the hydroxymethylpyrimidine phosphate (HMP-P) moiety of thiamine from aminoimidazole ribotide (AIR) in a radical S-adenosyl-L-methionine (SAM)-dependent reaction. This chain is Phosphomethylpyrimidine synthase, found in Caldanaerobacter subterraneus subsp. tengcongensis (strain DSM 15242 / JCM 11007 / NBRC 100824 / MB4) (Thermoanaerobacter tengcongensis).